Reading from the N-terminus, the 209-residue chain is Kynurenine formamidase (209 aa).

Substrate is bound at residue tryptophan 19. Zn(2+) is bound by residues histidine 49, histidine 53, and aspartate 55. The Proton donor/acceptor role is filled by histidine 59. Zn(2+)-binding residues include histidine 160 and glutamate 172.

This sequence belongs to the Cyclase 1 superfamily. KynB family. In terms of assembly, homodimer. It depends on Zn(2+) as a cofactor.

The catalysed reaction is N-formyl-L-kynurenine + H2O = L-kynurenine + formate + H(+). Its pathway is amino-acid degradation; L-tryptophan degradation via kynurenine pathway; L-kynurenine from L-tryptophan: step 2/2. Functionally, catalyzes the hydrolysis of N-formyl-L-kynurenine to L-kynurenine, the second step in the kynurenine pathway of tryptophan degradation. This Geobacillus thermodenitrificans (strain NG80-2) protein is Kynurenine formamidase.